We begin with the raw amino-acid sequence, 364 residues long: MSDEGSRGSRLPLALPPASQGCSSGGGGGGGGGGSSSAGGSGNPRPPRNLQGLLQMAITAGSEEPDPPPEPMSEERRQWLQEAMSAAFRGQREEVEQMKSCLRVLSQPMPPTAGEAEQAADQQEREGALELLADLCENMDNAADFCQLSGMHLLVGRYLEAGAAGLRWRAAQLIGTCSQNVAAIQEQVLGLGALRKLLRLLDRDACDTVRVKALFAISCLVREQEAGLLQFLRLDGFSVLMRAMQQQVQKLKVKSAFLLQNLLVGHPEHRGTLCSMGMVQQLVALVRTEHSPFHEHVLGALCSLVTDFPQGVRECREPELGLEELLRHRCQLLQQHEEYQEELEFCEKLLQTCFSSPTDDSMDR.

Residues 1–75 form a disordered region; the sequence is MSDEGSRGSR…DPPPEPMSEE (75 aa). Over residues 23–42 the composition is skewed to gly residues; the sequence is SSGGGGGGGGGGSSSAGGSG. ARM repeat units lie at residues 137-179, 182-222, 225-264, and 267-306; these read ENMD…TCSQ, AAIQ…CLVR, EAGLLQFLRLDGFSVLMRAMQQQVQKLKVKSAFLLQNLLV, and PEHRGTLCSMGMVQQLVALVRTEHSPFHEHVLGALCSLVT. A phosphoserine mark is found at Ser356 and Ser361.

In terms of assembly, interacts with the ATP-binding domain of HSPA1A. Detected in a ternary complex containing STUB1, HSPA1A and HSPBP1. Interacts with PGLYRP1; this interaction blocks the cytotoxic activity of the PGLYRP1-HSPA1A complex.

Its function is as follows. Inhibits HSPA1A chaperone activity by changing the conformation of the ATP-binding domain of HSPA1A and interfering with ATP binding. Interferes with ubiquitination mediated by STUB1 and inhibits chaperone-assisted degradation of target proteins. The protein is Hsp70-binding protein 1 (HSPBP1) of Macaca fascicularis (Crab-eating macaque).